The chain runs to 349 residues: Pseudouridylate synthase TRUB1 (349 aa).

Ala2 is modified (N-acetylalanine). Position 11 is a phosphoserine (Ser11). Asp121 acts as the Nucleophile in catalysis.

It belongs to the pseudouridine synthase TruB family. In terms of tissue distribution, highly expressed in heart, skeletal muscle and liver. Expressed at lower levels in lung, small intestine, kidney and spleen.

Its subcellular location is the nucleus. The protein localises to the cytoplasm. The protein resides in the cytosol. The enzyme catalyses a uridine in mRNA = a pseudouridine in mRNA. The catalysed reaction is a uridine in tRNA = a pseudouridine in tRNA. It catalyses the reaction uridine(55) in tRNA = pseudouridine(55) in tRNA. Functionally, pseudouridine synthase that catalyzes pseudouridylation of mRNAs and tRNAs. Mediates pseudouridylation of mRNAs with the consensus sequence 5'-GUUCNANNC-3', harboring a stem-loop structure. Constitutes the major pseudouridine synthase acting on mRNAs. Also catalyzes pseudouridylation of some tRNAs, including synthesis of pseudouridine(55) from uracil-55, in the psi GC loop of a subset of tRNAs. Promotes the processing of pri-let-7 microRNAs (pri-miRNAs) independently of its RNA pseudouridylate synthase activity. Acts by binding to the stem-loop structure on pri-let-7, preventing LIN28-binding (LIN28A and/or LIN28B), thereby enhancing the interaction between pri-let-7 and the microprocessor DGCR8, which mediates miRNA maturation. The chain is Pseudouridylate synthase TRUB1 from Homo sapiens (Human).